Reading from the N-terminus, the 292-residue chain is Protein/nucleic acid deglycase HchA (292 aa).

The segment covering 1–12 (MSQDVNELSKQP) has biased composition (polar residues). Residues 1–23 (MSQDVNELSKQPTPDKAEDNAFF) are disordered. C190 functions as the Nucleophile in the catalytic mechanism.

Belongs to the peptidase C56 family. HchA subfamily.

The protein localises to the cytoplasm. It catalyses the reaction N(omega)-(1-hydroxy-2-oxopropyl)-L-arginyl-[protein] + H2O = lactate + L-arginyl-[protein] + H(+). The catalysed reaction is N(6)-(1-hydroxy-2-oxopropyl)-L-lysyl-[protein] + H2O = lactate + L-lysyl-[protein] + H(+). The enzyme catalyses S-(1-hydroxy-2-oxopropyl)-L-cysteinyl-[protein] + H2O = lactate + L-cysteinyl-[protein] + H(+). It carries out the reaction N(omega)-(1-hydroxy-2-oxoethyl)-L-arginyl-[protein] + H2O = L-arginyl-[protein] + glycolate + H(+). It catalyses the reaction N(6)-(1-hydroxy-2-oxoethyl)-L-lysyl-[protein] + H2O = glycolate + L-lysyl-[protein] + H(+). The catalysed reaction is S-(1-hydroxy-2-oxoethyl)-L-cysteinyl-[protein] + H2O = glycolate + L-cysteinyl-[protein] + H(+). The enzyme catalyses N(2)-(1-hydroxy-2-oxopropyl)-dGTP + H2O = lactate + dGTP + H(+). It carries out the reaction N(2)-(1-hydroxy-2-oxopropyl)-GTP + H2O = lactate + GTP + H(+). It catalyses the reaction N(2)-(1-hydroxy-2-oxopropyl)-GDP + H2O = lactate + GDP + H(+). The catalysed reaction is N(2)-(1-hydroxy-2-oxopropyl)-GMP + H2O = lactate + GMP + H(+). The enzyme catalyses N(2)-(1-hydroxy-2-oxoethyl)-dGTP + H2O = dGTP + glycolate + H(+). It carries out the reaction N(2)-(1-hydroxy-2-oxoethyl)-GTP + H2O = glycolate + GTP + H(+). It catalyses the reaction N(2)-(1-hydroxy-2-oxoethyl)-GDP + H2O = glycolate + GDP + H(+). The catalysed reaction is N(2)-(1-hydroxy-2-oxoethyl)-GMP + H2O = glycolate + GMP + H(+). The enzyme catalyses an N(2)-(1-hydroxy-2-oxopropyl)-guanosine in RNA + H2O = a guanosine in RNA + lactate + H(+). It carries out the reaction an N(2)-(1-hydroxy-2-oxopropyl)-2'-deoxyguanosine in DNA + H2O = a 2'-deoxyguanosine in DNA + lactate + H(+). It catalyses the reaction an N(2)-(1-hydroxy-2-oxoethyl)-guanosine in RNA + H2O = a guanosine in RNA + glycolate + H(+). The catalysed reaction is an N(2)-(1-hydroxy-2-oxoethyl)-2'-deoxyguanosine in DNA + H2O = a 2'-deoxyguanosine in DNA + glycolate + H(+). Protein and nucleotide deglycase that catalyzes the deglycation of the Maillard adducts formed between amino groups of proteins or nucleotides and reactive carbonyl groups of glyoxals. Thus, functions as a protein deglycase that repairs methylglyoxal- and glyoxal-glycated proteins, and releases repaired proteins and lactate or glycolate, respectively. Deglycates cysteine, arginine and lysine residues in proteins, and thus reactivates these proteins by reversing glycation by glyoxals. Acts on early glycation intermediates (hemithioacetals and aminocarbinols), preventing the formation of Schiff bases and advanced glycation endproducts (AGE). Also functions as a nucleotide deglycase able to repair glycated guanine in the free nucleotide pool (GTP, GDP, GMP, dGTP) and in DNA and RNA. Is thus involved in a major nucleotide repair system named guanine glycation repair (GG repair), dedicated to reversing methylglyoxal and glyoxal damage via nucleotide sanitization and direct nucleic acid repair. Plays an important role in protecting cells from carbonyl stress. The chain is Protein/nucleic acid deglycase HchA from Staphylococcus aureus (strain bovine RF122 / ET3-1).